The primary structure comprises 119 residues: Large ribosomal subunit protein bL20 (119 aa).

This sequence belongs to the bacterial ribosomal protein bL20 family.

In terms of biological role, binds directly to 23S ribosomal RNA and is necessary for the in vitro assembly process of the 50S ribosomal subunit. It is not involved in the protein synthesizing functions of that subunit. This Geobacillus kaustophilus (strain HTA426) protein is Large ribosomal subunit protein bL20.